The primary structure comprises 261 residues: Glandular kallikrein-7, submandibular/renal (261 aa).

The first 18 residues, 1-18 (MWFLILFLDLSLGQIDAA), serve as a signal peptide directing secretion. Positions 19 to 24 (PPGQSR) are cleaved as a propeptide — activation peptide. Residues 25-258 (VIGGYKCEKN…FTSWIKEVMK (234 aa)) enclose the Peptidase S1 domain. 5 disulfides stabilise this stretch: Cys-31–Cys-173, Cys-50–Cys-66, Cys-152–Cys-219, Cys-184–Cys-198, and Cys-209–Cys-234. Residue His-65 is the Charge relay system of the active site. Asn-108 carries an N-linked (GlcNAc...) asparagine glycan. The Charge relay system role is filled by Asp-120. Ser-213 (charge relay system) is an active-site residue.

It belongs to the peptidase S1 family. Kallikrein subfamily. Kidney and submandibular gland. Not expressed in liver, pancreas, spleen, parotid, testis, cortex, prostate, ovary and pituitary.

The enzyme catalyses Preferential cleavage of Arg-|-Xaa bonds in small molecule substrates. Highly selective action to release kallidin (lysyl-bradykinin) from kininogen involves hydrolysis of Met-|-Xaa or Leu-|-Xaa.. Glandular kallikreins cleave Met-Lys and Arg-Ser bonds in kininogen to release Lys-bradykinin. Predominant kallikrein protein in the kidney. This is Glandular kallikrein-7, submandibular/renal (Klk7) from Rattus norvegicus (Rat).